The following is a 130-amino-acid chain: Small ribosomal subunit protein uS8 (130 aa).

The protein belongs to the universal ribosomal protein uS8 family. As to quaternary structure, part of the 30S ribosomal subunit. Contacts proteins S5 and S12.

One of the primary rRNA binding proteins, it binds directly to 16S rRNA central domain where it helps coordinate assembly of the platform of the 30S subunit. In Photobacterium profundum (strain SS9), this protein is Small ribosomal subunit protein uS8.